A 285-amino-acid chain; its full sequence is MSDEVQPGFVRVRLDLSYDGTEFSGWAKQAAGRRTVQGEIEDALRTVTRSGETTYELTVAGRTDAGVHARGQVAHVDLPGELWAEHQEKLLKRLAGRLPKDVRVWSLTEAPSGFNARFSAIWRRYAYRVTDNTGGVDPLLRSHVLWHDWPLDVDAMNEAARRLVGEHDFAAYCKKREGATTIRTLQELSLVRGDDGVITATVCADAFCHNMVRSLIGALLFVGDGHRGPDWPGKVLAVGVRDSAVHVVRPHGLTLEEVGYPADELLAARNKEARNKRTLPAAGCC.

Aspartate 64 serves as the catalytic Nucleophile. Substrate is bound at residue tyrosine 125.

It belongs to the tRNA pseudouridine synthase TruA family. As to quaternary structure, homodimer.

The enzyme catalyses uridine(38/39/40) in tRNA = pseudouridine(38/39/40) in tRNA. Its function is as follows. Formation of pseudouridine at positions 38, 39 and 40 in the anticodon stem and loop of transfer RNAs. The chain is tRNA pseudouridine synthase A from Streptomyces avermitilis (strain ATCC 31267 / DSM 46492 / JCM 5070 / NBRC 14893 / NCIMB 12804 / NRRL 8165 / MA-4680).